The chain runs to 1164 residues: Nuclear exosome regulator NRDE2 (1164 aa).

Disordered stretches follow at residues 1–25 (MALFPAFAGLSEAPDGGSSRKELDW) and 39–149 (LSQQ…GHRF). Residue Ala-2 is modified to N-acetylalanine. Positions 61-73 (LKSESSDESDTNK) are enriched in basic and acidic residues. A coiled-coil region spans residues 61-383 (LKSESSDESD…IESNQSSVDL (323 aa)). Basic residues predominate over residues 74 to 103 (KLKQTSRKKKKEKKKKRKHQHHKKTKRKHG). Residues 110–133 (SETDTDSEKDKPSRGVGGSKKESE) show a composition bias toward basic and acidic residues. The interval 163 to 266 (FRTDKKPDPA…KDLEDAAPVT (104 aa)) is MID/MTR4-interacting domain. The segment at 279 to 305 (TTHWLQGQGPPEQESKQPDAQPDSESA) is disordered. HAT repeat units lie at residues 305 to 337 (AALKAKVEEFNRRVRENPRDTQLWMAFVAFQDE), 395 to 427 (WEPSTLVKEWQKLIFLHPNNTALWQKYLLFCQS), 758 to 792 (SQGKNCKKLAKNLLKEPENCNNFCLWKQYAHLEWL), 978 to 1010 (YPLAPLREALSQALKLYPGNQVLWRSYVQIQNK), and 1067 to 1101 (GLMHRIQALFENAMRSDSGSQCPLLWRMYLNFLVS).

The protein belongs to the NRDE2 family. In terms of assembly, interacts with MTREX; the interaction is direct and stabilizes NRDE2. Interacts with EXOSC10, EFTUD2 and EIF4A3.

The protein localises to the nucleus speckle. Its subcellular location is the nucleus. It localises to the nucleolus. It is found in the nucleoplasm. Functionally, protein of the nuclear speckles that regulates RNA degradation and export from the nucleus through its interaction with MTREX an essential factor directing various RNAs to exosomal degradation. Changes the conformation of MTREX, precluding its association with the nuclear exosome and interaction with proteins required for its function in RNA exosomal degradation. Negatively regulates, for instance, the degradation of mRNAs and lncRNAs by inhibiting their MTREX-mediated recruitment to nuclear exosome. By preventing the degradation of RNAs in the nucleus, it promotes their export to the cytoplasm. U5 snRNP-associated RNA splicing factor which is required for efficient splicing of CEP131 pre-mRNA and plays an important role in centrosome maturation, integrity and function during mitosis. Suppresses intron retention in a subset of pre-mRNAs containing short, GC-rich introns with relatively weak 5' and 3' splice sites. Plays a role in DNA damage response. This Homo sapiens (Human) protein is Nuclear exosome regulator NRDE2.